We begin with the raw amino-acid sequence, 624 residues long: Chaperone protein HtpG (624 aa).

The tract at residues 1–336 (MKGQETRGFQ…SNDLPLNVSR (336 aa)) is a; substrate-binding. A b region spans residues 337 to 552 (EILQDSTVTR…ADEMSTQMAK (216 aa)). The c stretch occupies residues 553–624 (LFAAAGQSVP…IRRMNQLLVS (72 aa)).

Belongs to the heat shock protein 90 family. As to quaternary structure, homodimer.

The protein localises to the cytoplasm. In terms of biological role, molecular chaperone. Has ATPase activity. The sequence is that of Chaperone protein HtpG from Salmonella paratyphi B (strain ATCC BAA-1250 / SPB7).